The primary structure comprises 269 residues: 4-hydroxy-tetrahydrodipicolinate reductase (269 aa).

NAD(+) is bound at residue 11-16; it reads GPIGRM. K39 is an NADP(+) binding site. Residues 101-103 and 125-128 contribute to the NAD(+) site; these read GTT and ASNF. H158 (proton donor/acceptor) is an active-site residue. Residue H159 participates in (S)-2,3,4,5-tetrahydrodipicolinate binding. Residue K162 is the Proton donor of the active site. 168–169 provides a ligand contact to (S)-2,3,4,5-tetrahydrodipicolinate; that stretch reads GT.

This sequence belongs to the DapB family. As to quaternary structure, homotetramer.

The protein resides in the cytoplasm. It carries out the reaction (S)-2,3,4,5-tetrahydrodipicolinate + NAD(+) + H2O = (2S,4S)-4-hydroxy-2,3,4,5-tetrahydrodipicolinate + NADH + H(+). The enzyme catalyses (S)-2,3,4,5-tetrahydrodipicolinate + NADP(+) + H2O = (2S,4S)-4-hydroxy-2,3,4,5-tetrahydrodipicolinate + NADPH + H(+). It participates in amino-acid biosynthesis; L-lysine biosynthesis via DAP pathway; (S)-tetrahydrodipicolinate from L-aspartate: step 4/4. In terms of biological role, catalyzes the conversion of 4-hydroxy-tetrahydrodipicolinate (HTPA) to tetrahydrodipicolinate. This Buchnera aphidicola subsp. Acyrthosiphon pisum (strain Tuc7) protein is 4-hydroxy-tetrahydrodipicolinate reductase.